Reading from the N-terminus, the 578-residue chain is E3 ubiquitin-protein ligase hrd-like protein 1 (578 aa).

The helical transmembrane segment at 32–52 threads the bilayer; the sequence is GYLALSLCVAFIASASVFTHF. Asparagine 68 carries N-linked (GlcNAc...) asparagine glycosylation. A run of 7 helical transmembrane segments spans residues 76–96, 101–121, 134–154, 163–183, 202–222, 230–250, and 286–306; these read FGIN…HYIL, LIWV…KLII, VAAR…LSVV, VMPW…QFVT, SFIS…VSRF, PAVL…YILF, and FLSY…SIFF. The RING-type; atypical zinc finger occupies 350–388; sequence CIVCWELLGTSRRLPCSHQFHDWCLMWWLAQDSSCPTCR. The region spanning 447–489 is the CUE domain; that stretch reads QLQSMLETVLEMFPQMSPETILADLRQSGSAQSTIENILEGRM. Residue asparagine 492 is glycosylated (N-linked (GlcNAc...) asparagine).

It localises to the membrane. Its function is as follows. Proposed to have a role in neuroprotection. The polypeptide is E3 ubiquitin-protein ligase hrd-like protein 1 (Caenorhabditis briggsae).